A 142-amino-acid polypeptide reads, in one-letter code: MKYVAIDYGTKYTGIAVSDSMGVFAFPKQSIIMTTQKEFFIKLVELIYVESPDALVVGLPVLFDNSETLITRQVRNFIKRLKHKIMLPVFLMKEILSSYEAKLDLQSVGYRKNKIKSVLDQQAAVRILQSFLDQSESERVQV.

It belongs to the YqgF nuclease family.

It is found in the cytoplasm. Its function is as follows. Could be a nuclease involved in processing of the 5'-end of pre-16S rRNA. The sequence is that of Putative pre-16S rRNA nuclease from Lawsonia intracellularis (strain PHE/MN1-00).